The sequence spans 97 residues: Putative pterin-4-alpha-carbinolamine dehydratase (97 aa).

Belongs to the pterin-4-alpha-carbinolamine dehydratase family.

The catalysed reaction is (4aS,6R)-4a-hydroxy-L-erythro-5,6,7,8-tetrahydrobiopterin = (6R)-L-erythro-6,7-dihydrobiopterin + H2O. This chain is Putative pterin-4-alpha-carbinolamine dehydratase, found in Saccharolobus solfataricus (strain ATCC 35092 / DSM 1617 / JCM 11322 / P2) (Sulfolobus solfataricus).